Consider the following 357-residue polypeptide: Chorismate synthase (357 aa).

Residues arginine 48 and arginine 54 each coordinate NADP(+). Residues 125-127 (RSS), 243-244 (NA), glycine 283, 298-302 (KPTSS), and arginine 324 contribute to the FMN site.

It belongs to the chorismate synthase family. In terms of assembly, homotetramer. FMNH2 is required as a cofactor.

It catalyses the reaction 5-O-(1-carboxyvinyl)-3-phosphoshikimate = chorismate + phosphate. Its pathway is metabolic intermediate biosynthesis; chorismate biosynthesis; chorismate from D-erythrose 4-phosphate and phosphoenolpyruvate: step 7/7. Functionally, catalyzes the anti-1,4-elimination of the C-3 phosphate and the C-6 proR hydrogen from 5-enolpyruvylshikimate-3-phosphate (EPSP) to yield chorismate, which is the branch point compound that serves as the starting substrate for the three terminal pathways of aromatic amino acid biosynthesis. This reaction introduces a second double bond into the aromatic ring system. This Pasteurella multocida (strain Pm70) protein is Chorismate synthase.